Reading from the N-terminus, the 420-residue chain is Pyrophosphate--fructose 6-phosphate 1-phosphotransferase (420 aa).

Residue Gly13 coordinates diphosphate. Substrate contacts are provided by residues 142–144, 190–192, Glu247, and 297–300; these read TVD, MGR, and YLQR. The active-site Proton acceptor is the Asp144.

Belongs to the phosphofructokinase type A (PFKA) family. PPi-dependent PFK group II subfamily. Clade 'B2' sub-subfamily. In terms of assembly, homodimer. Mg(2+) is required as a cofactor. Co(2+) serves as cofactor. It depends on Mn(2+) as a cofactor.

The protein resides in the cytoplasm. It carries out the reaction beta-D-fructose 6-phosphate + diphosphate = beta-D-fructose 1,6-bisphosphate + phosphate + H(+). It participates in carbohydrate degradation; glycolysis; D-glyceraldehyde 3-phosphate and glycerone phosphate from D-glucose: step 3/4. With respect to regulation, non-allosteric. Functionally, catalyzes the phosphorylation of D-fructose 6-phosphate, the first committing step of glycolysis. Uses inorganic phosphate (PPi) as phosphoryl donor instead of ATP like common ATP-dependent phosphofructokinases (ATP-PFKs), which renders the reaction reversible, and can thus function both in glycolysis and gluconeogenesis. Consistently, PPi-PFK can replace the enzymes of both the forward (ATP-PFK) and reverse (fructose-bisphosphatase (FBPase)) reactions. This is Pyrophosphate--fructose 6-phosphate 1-phosphotransferase from Methylococcus capsulatus (strain ATCC 33009 / NCIMB 11132 / Bath).